A 230-amino-acid chain; its full sequence is 5'-methylthioadenosine/S-adenosylhomocysteine nucleosidase (230 aa).

The Proton acceptor role is filled by glutamate 12. Substrate is bound by residues glycine 78, isoleucine 153, and 174-175 (ME). Aspartate 198 acts as the Proton donor in catalysis.

Belongs to the PNP/UDP phosphorylase family. MtnN subfamily.

It catalyses the reaction S-adenosyl-L-homocysteine + H2O = S-(5-deoxy-D-ribos-5-yl)-L-homocysteine + adenine. The catalysed reaction is S-methyl-5'-thioadenosine + H2O = 5-(methylsulfanyl)-D-ribose + adenine. It carries out the reaction 5'-deoxyadenosine + H2O = 5-deoxy-D-ribose + adenine. It functions in the pathway amino-acid biosynthesis; L-methionine biosynthesis via salvage pathway; S-methyl-5-thio-alpha-D-ribose 1-phosphate from S-methyl-5'-thioadenosine (hydrolase route): step 1/2. Catalyzes the irreversible cleavage of the glycosidic bond in both 5'-methylthioadenosine (MTA) and S-adenosylhomocysteine (SAH/AdoHcy) to adenine and the corresponding thioribose, 5'-methylthioribose and S-ribosylhomocysteine, respectively. Also cleaves 5'-deoxyadenosine, a toxic by-product of radical S-adenosylmethionine (SAM) enzymes, into 5-deoxyribose and adenine. The protein is 5'-methylthioadenosine/S-adenosylhomocysteine nucleosidase of Shewanella pealeana (strain ATCC 700345 / ANG-SQ1).